A 452-amino-acid polypeptide reads, in one-letter code: Lamina-associated polypeptide 2, isoforms beta/delta/epsilon/gamma (452 aa).

The tract at residues 1–409 (MPEFLEDPSV…KSEKTKKRRS (409 aa)) is nucleoplasmic. The LEM-like domain maps to 5-48 (LEDPSVLTKDKLKSELVANNVTLPAGEQRKDVYVQLYLQHLTAR). Disordered regions lie at residues 48 to 111 (RNRP…DLDV) and 149 to 263 (REQG…RVET). The linker stretch occupies residues 49–108 (NRPPLAAGANSKGPPDFSSDEEREPTPVLGSGASVGRGRGAVGRKATKKTDKPRLEDKDD). 3 positions are modified to phosphoserine: Ser59, Ser66, and Ser67. Residue Thr74 is modified to Phosphothreonine. Phosphoserine occurs at positions 79 and 82. Residues Arg85 and Arg87 each carry the omega-N-methylarginine modification. A compositionally biased stretch (basic and acidic residues) spans 96–105 (KKTDKPRLED). The region spanning 109 to 153 (LDVTELSNEELLDQLVRYGVNPGPIVGTTRKLYEKKLLKLREQGT) is the LEM domain. The tract at residues 137 to 242 (TRKLYEKKLL…TSGSSTGGPL (106 aa)) is NAKAP95-binding N. The residue at position 153 (Thr153) is a Phosphothreonine. Residues 154–177 (ESRSSTPLPTVSSSAENTRQNGSN) are compositionally biased toward polar residues. Phosphoserine is present on residues Ser155 and Ser158. 2 positions are modified to phosphothreonine: Thr159 and Thr163. A phosphoserine mark is found at Ser165, Ser167, and Ser176. A compositionally biased stretch (basic and acidic residues) spans 178–202 (DSDRYSDNDEDSKIELKLEKREPLK). Phosphoserine; by PKC is present on Ser179. Residues Ser183 and Ser189 each carry the phosphoserine modification. Lys206 bears the N6-acetyllysine mark. Residue Thr210 is modified to Phosphothreonine. 2 positions are modified to phosphoserine: Ser221 and Ser223. Residues 226–240 (GVTETEWTSGSSTGG) are compositionally biased toward low complexity. Ser249, Ser253, Ser264, Ser291, Ser305, and Ser306 each carry phosphoserine. The binds lamins B stretch occupies residues 298–370 (TGNFKHASSI…SCRRPIKGAA (73 aa)). An NAKAP95-binding C region spans residues 299-373 (GNFKHASSIL…RPIKGAAGRP (75 aa)). Position 311 is a phosphothreonine (Thr311). Residue Ser314 is modified to Phosphoserine. Arg319 carries the post-translational modification Citrulline. 3 positions are modified to phosphoserine: Ser361, Ser377, and Ser384. Residue Lys388 is modified to N6-acetyllysine. A Glycyl lysine isopeptide (Lys-Gly) (interchain with G-Cter in SUMO2) cross-link involves residue Lys400. Ser401 carries the post-translational modification Phosphoserine. A helical; Signal-anchor for type II membrane protein membrane pass occupies residues 410–430 (VPMWIKMLLFALVAVFLFLVY). Over 431 to 452 (QAMETNQGNPFTNFLQDTKISN) the chain is Lumenal.

The protein belongs to the LEM family. As to quaternary structure, interacts with LMNB1, LMNB2, BANF1, AKAP8L, GMCL and chromosomes. In terms of processing, mitosis-specific phosphorylation specifically abolishes its binding to lamin B and chromosomes. Citrullinated by PADI4.

Its subcellular location is the nucleus inner membrane. The protein localises to the chromosome. May help direct the assembly of the nuclear lamina and thereby help maintain the structural organization of the nuclear envelope. Possible receptor for attachment of lamin filaments to the inner nuclear membrane. May be involved in the control of initiation of DNA replication through its interaction with NAKAP95. The chain is Lamina-associated polypeptide 2, isoforms beta/delta/epsilon/gamma (Tmpo) from Mus musculus (Mouse).